Reading from the N-terminus, the 316-residue chain is Ribosomal RNA small subunit methyltransferase H (316 aa).

Residues 35 to 37 (SGH), D55, F84, D105, and Q112 each bind S-adenosyl-L-methionine.

It belongs to the methyltransferase superfamily. RsmH family.

Its subcellular location is the cytoplasm. The catalysed reaction is cytidine(1402) in 16S rRNA + S-adenosyl-L-methionine = N(4)-methylcytidine(1402) in 16S rRNA + S-adenosyl-L-homocysteine + H(+). Specifically methylates the N4 position of cytidine in position 1402 (C1402) of 16S rRNA. The chain is Ribosomal RNA small subunit methyltransferase H from Streptococcus equi subsp. zooepidemicus (strain MGCS10565).